Here is a 599-residue protein sequence, read N- to C-terminus: Pentatricopeptide repeat-containing protein At3g62470, mitochondrial (599 aa).

The transit peptide at methionine 1–valine 99 directs the protein to the mitochondrion. PPR repeat units lie at residues aspartate 194–threonine 228, glutamate 230–isoleucine 262, glycine 263–arginine 293, asparagine 297–proline 331, aspartate 332–proline 366, asparagine 367–proline 401, aspartate 402–proline 436, aspartate 437–proline 471, serine 472–proline 506, and aspartate 507–threonine 541.

Belongs to the PPR family. P subfamily.

It localises to the mitochondrion. The protein is Pentatricopeptide repeat-containing protein At3g62470, mitochondrial of Arabidopsis thaliana (Mouse-ear cress).